The primary structure comprises 466 residues: Ribulose bisphosphate carboxylase (466 aa).

Asn111 serves as a coordination point for substrate. Catalysis depends on Lys166, which acts as the Proton acceptor. A substrate-binding site is contributed by Lys168. Positions 191, 193, and 194 each coordinate Mg(2+). Lys191 bears the N6-carboxylysine mark. His287 functions as the Proton acceptor in the catalytic mechanism. Positions 288, 321, and 368 each coordinate substrate.

Belongs to the RuBisCO large chain family. Type II subfamily. Homodimer. Mg(2+) is required as a cofactor.

The enzyme catalyses 2 (2R)-3-phosphoglycerate + 2 H(+) = D-ribulose 1,5-bisphosphate + CO2 + H2O. It carries out the reaction D-ribulose 1,5-bisphosphate + O2 = 2-phosphoglycolate + (2R)-3-phosphoglycerate + 2 H(+). Its function is as follows. RuBisCO catalyzes two reactions: the carboxylation of D-ribulose 1,5-bisphosphate, the primary event in carbon dioxide fixation, as well as the oxidative fragmentation of the pentose substrate. Both reactions occur simultaneously and in competition at the same active site. The chain is Ribulose bisphosphate carboxylase (cbbM) from Rhodospirillum rubrum.